Consider the following 147-residue polypeptide: Ribosomal RNA large subunit methyltransferase H (147 aa).

Residues Leu-66, Gly-95, and 114 to 119 (LSELTF) contribute to the S-adenosyl-L-methionine site.

Belongs to the RNA methyltransferase RlmH family. As to quaternary structure, homodimer.

It is found in the cytoplasm. The enzyme catalyses pseudouridine(1915) in 23S rRNA + S-adenosyl-L-methionine = N(3)-methylpseudouridine(1915) in 23S rRNA + S-adenosyl-L-homocysteine + H(+). In terms of biological role, specifically methylates the pseudouridine at position 1915 (m3Psi1915) in 23S rRNA. The chain is Ribosomal RNA large subunit methyltransferase H from Synechococcus sp. (strain RCC307).